Reading from the N-terminus, the 133-residue chain is Large ribosomal subunit protein eL32y (133 aa).

It belongs to the eukaryotic ribosomal protein eL32 family.

In Arabidopsis thaliana (Mouse-ear cress), this protein is Large ribosomal subunit protein eL32y (RPL32B).